A 134-amino-acid chain; its full sequence is ATP synthase epsilon chain (134 aa).

It belongs to the ATPase epsilon chain family. As to quaternary structure, F-type ATPases have 2 components, CF(1) - the catalytic core - and CF(0) - the membrane proton channel. CF(1) has five subunits: alpha(3), beta(3), gamma(1), delta(1), epsilon(1). CF(0) has three main subunits: a, b and c.

The protein resides in the cell membrane. In terms of biological role, produces ATP from ADP in the presence of a proton gradient across the membrane. This is ATP synthase epsilon chain from Ruminococcus albus (strain ATCC 27210 / DSM 20455 / JCM 14654 / NCDO 2250 / 7).